Here is a 72-residue protein sequence, read N- to C-terminus: Neuropeptide SIFamide (72 aa).

The N-terminal stretch at 1–26 is a signal peptide; sequence MALRFTLTLLLVTILVAAILLGSSEA. The N-linked (GlcNAc...) asparagine glycan is linked to N34. F38 carries the phenylalanine amide modification. A propeptide spanning residues 42–72 is cleaved from the precursor; sequence NSLDYDSAKMSAVCEVAMEACPMWFPQNDSK.

It belongs to the FARP (FMRFamide related peptide) family. As to expression, strongly expressed in two pairs of neurons in the pars intercerebralis (at protein level).

The protein localises to the secreted. Ligand for the neuropeptide SIFamide receptor. Modulates sexual behavior by negatively regulating female receptivity to male courtship and by playing a role in male sex discrimination. Also involved in promoting sleep. This chain is Neuropeptide SIFamide, found in Drosophila melanogaster (Fruit fly).